A 463-amino-acid chain; its full sequence is Exodeoxyribonuclease 7 large subunit (463 aa).

Belongs to the XseA family. In terms of assembly, heterooligomer composed of large and small subunits.

It localises to the cytoplasm. The enzyme catalyses Exonucleolytic cleavage in either 5'- to 3'- or 3'- to 5'-direction to yield nucleoside 5'-phosphates.. Its function is as follows. Bidirectionally degrades single-stranded DNA into large acid-insoluble oligonucleotides, which are then degraded further into small acid-soluble oligonucleotides. This Klebsiella pneumoniae (strain 342) protein is Exodeoxyribonuclease 7 large subunit.